The chain runs to 96 residues: Large ribosomal subunit protein uL23 (96 aa).

This sequence belongs to the universal ribosomal protein uL23 family. As to quaternary structure, part of the 50S ribosomal subunit. Contacts protein L29, and trigger factor when it is bound to the ribosome.

In terms of biological role, one of the early assembly proteins it binds 23S rRNA. One of the proteins that surrounds the polypeptide exit tunnel on the outside of the ribosome. Forms the main docking site for trigger factor binding to the ribosome. This chain is Large ribosomal subunit protein uL23, found in Aster yellows witches'-broom phytoplasma (strain AYWB).